A 238-amino-acid chain; its full sequence is Ribonuclease PH (238 aa).

Phosphate contacts are provided by residues arginine 86 and 124-126 (GTR).

This sequence belongs to the RNase PH family. In terms of assembly, homohexameric ring arranged as a trimer of dimers.

It catalyses the reaction tRNA(n+1) + phosphate = tRNA(n) + a ribonucleoside 5'-diphosphate. Phosphorolytic 3'-5' exoribonuclease that plays an important role in tRNA 3'-end maturation. Removes nucleotide residues following the 3'-CCA terminus of tRNAs; can also add nucleotides to the ends of RNA molecules by using nucleoside diphosphates as substrates, but this may not be physiologically important. Probably plays a role in initiation of 16S rRNA degradation (leading to ribosome degradation) during starvation. This is Ribonuclease PH from Brucella abortus (strain S19).